The primary structure comprises 174 residues: CASP-like protein 4D2 (174 aa).

At 1-14 the chain is on the cytoplasmic side; sequence MAPPPPSPPAVSLK. A helical transmembrane segment spans residues 15–35; it reads VLLLLLRVLTGVFLVIALIIL. Over 36-60 the chain is Extracellular; sequence STNSVTIVSQGSALKFHFKDVYAYR. The chain crosses the membrane as a helical span at residues 61–81; it reads YMLSAAVIGLVYAVIQLFFTI. The Cytoplasmic portion of the chain corresponds to 82-97; that stretch reads SEFATGVKNPFNYQLD. Residues 98–118 form a helical membrane-spanning segment; that stretch reads FYGDKLISYLVATGSAAGFGV. The Extracellular segment spans residues 119–150; it reads TKDLKDTFLALVALDSTDPVDKFFSKGYASAS. The chain crosses the membrane as a helical span at residues 151–171; the sequence is LLLFAFICLAVLSVFSSFAMA. Residues 172-174 lie on the Cytoplasmic side of the membrane; that stretch reads KRN.

Belongs to the Casparian strip membrane proteins (CASP) family. As to quaternary structure, homodimer and heterodimers.

It localises to the cell membrane. The polypeptide is CASP-like protein 4D2 (Arabidopsis thaliana (Mouse-ear cress)).